The chain runs to 160 residues: 6,7-dimethyl-8-ribityllumazine synthase (160 aa).

Residues Trp27, 59–61, and 81–83 contribute to the 5-amino-6-(D-ribitylamino)uracil site; these read AIE and VVI. 86-87 lines the (2S)-2-hydroxy-3-oxobutyl phosphate pocket; it reads QT. His89 acts as the Proton donor in catalysis. Asn114 serves as a coordination point for 5-amino-6-(D-ribitylamino)uracil. Residue Arg128 participates in (2S)-2-hydroxy-3-oxobutyl phosphate binding.

Belongs to the DMRL synthase family. Homopentamer.

It carries out the reaction (2S)-2-hydroxy-3-oxobutyl phosphate + 5-amino-6-(D-ribitylamino)uracil = 6,7-dimethyl-8-(1-D-ribityl)lumazine + phosphate + 2 H2O + H(+). Its pathway is cofactor biosynthesis; riboflavin biosynthesis; riboflavin from 2-hydroxy-3-oxobutyl phosphate and 5-amino-6-(D-ribitylamino)uracil: step 1/2. Functionally, catalyzes the formation of 6,7-dimethyl-8-ribityllumazine by condensation of 5-amino-6-(D-ribitylamino)uracil with 3,4-dihydroxy-2-butanone 4-phosphate. This is the penultimate step in the biosynthesis of riboflavin. This chain is 6,7-dimethyl-8-ribityllumazine synthase, found in Mycolicibacterium paratuberculosis (strain ATCC BAA-968 / K-10) (Mycobacterium paratuberculosis).